Here is a 306-residue protein sequence, read N- to C-terminus: MAGVGLAAVPAWVPCRRWGLAAVTFGFHHGLSTLLARKTERAPQWLRACRHKTSISFLSRPDLPNLAYKRLKGKSPGIIFIPGYISNMNGTKALAIEEFCKSLGHAYIRFDYSGVGNSDGNLEECTVGKWRKDVLSIIDDLAEGPQILVGSSLGGWLMFHAAIARPQKVVALVGVATAVDGLVTQFNQLPIETKKEIEMKGVWPMPSKYSEEGVYRIQYSVIKEAEHHCLLHSPIPVKCPVRLLHGMKDDIVPWHTSVQVADRVVSTDVDVILRKNSDHRMKEKADIQLLVYTIDDLIDKLSTIVH.

A mitochondrion-targeting transit peptide spans 1 to 52 (MAGVGLAAVPAWVPCRRWGLAAVTFGFHHGLSTLLARKTERAPQWLRACRHK). In terms of domain architecture, AB hydrolase-1 spans 78 to 177 (IIFIPGYISN…KVVALVGVAT (100 aa)). Residues S152, D249, and H279 each act as charge relay system in the active site.

This sequence belongs to the AB hydrolase superfamily.

The protein localises to the mitochondrion. The enzyme catalyses S-hexadecanoyl-L-cysteinyl-[protein] + H2O = L-cysteinyl-[protein] + hexadecanoate + H(+). It catalyses the reaction mycophenolic acid O-acyl-beta-D-glucuronide + H2O = mycophenolate + D-glucuronate + H(+). With respect to regulation, inhibited by palmostatin-B. Its function is as follows. Acts as an acyl-protein thioesterase that hydrolyzes fatty acids from acylated residues in proteins. Regulates the mitochondrial S-depalmitoylation of the nucleophilic active site residue of peroxiredoxin-5/PRDX5, a key antioxidant protein, therefore modulating mitochondrial antioxidant ability. Also catalyzes the deglucuronidation of mycophenolic acid acyl-glucuronide, an active metabolite of the immunosuppressant drug mycophenolate. The chain is Palmitoyl-protein thioesterase ABHD10, mitochondrial (ABHD10) from Bos taurus (Bovine).